Here is a 611-residue protein sequence, read N- to C-terminus: Chaperone protein DnaK (611 aa).

At Thr173 the chain carries Phosphothreonine; by autocatalysis. The span at 579–592 (AAGQAEGAQGAQDA) shows a compositional bias: low complexity. A disordered region spans residues 579–598 (AAGQAEGAQGAQDAGAKKDN).

This sequence belongs to the heat shock protein 70 family.

Its function is as follows. Acts as a chaperone. The sequence is that of Chaperone protein DnaK from Bacillus cereus (strain B4264).